A 310-amino-acid polypeptide reads, in one-letter code: Adenylyl-sulfate kinase 4, chloroplastic (310 aa).

The N-terminal 75 residues, 1 to 75 (MDVAAMARCV…MAKDESISSR (75 aa)), are a transit peptide targeting the chloroplast. 116 to 124 (GLSGSGKSS) is an ATP binding site. Residues Asp146, Arg149, Arg163, Asn166, 189–190 (IS), and Gly239 each bind substrate. The Phosphoserine intermediate role is filled by Ser190.

This sequence belongs to the APS kinase family. As to quaternary structure, homodimer; disulfide-linked. In terms of tissue distribution, expressed in root vasculature, root tips, leaf epidermal and guard cells, pollen grains and radicle of immature seeds.

Its subcellular location is the plastid. It is found in the chloroplast. The catalysed reaction is adenosine 5'-phosphosulfate + ATP = 3'-phosphoadenylyl sulfate + ADP + H(+). It functions in the pathway sulfur metabolism; hydrogen sulfide biosynthesis; sulfite from sulfate: step 2/3. Catalyzes the phosphorylation of adenosine 5'-phosphosulfate to 3'-phosphoadenylyl sulfate, which is the activated sulfate form for sulfation reactions. Essential for plant reproduction and viability. This chain is Adenylyl-sulfate kinase 4, chloroplastic (APK4), found in Arabidopsis thaliana (Mouse-ear cress).